Consider the following 160-residue polypeptide: Aspartate 1-decarboxylase 2 (160 aa).

Catalysis depends on Ser25, which acts as the Schiff-base intermediate with substrate; via pyruvic acid. The residue at position 25 (Ser25) is a Pyruvic acid (Ser). Thr57 serves as a coordination point for substrate. Tyr58 serves as the catalytic Proton donor. Position 73–75 (73–75 (GAA)) interacts with substrate.

The protein belongs to the PanD family. In terms of assembly, heterooctamer of four alpha and four beta subunits. It depends on pyruvate as a cofactor. Is synthesized initially as an inactive proenzyme, which is activated by self-cleavage at a specific serine bond to produce a beta-subunit with a hydroxyl group at its C-terminus and an alpha-subunit with a pyruvoyl group at its N-terminus.

Its subcellular location is the cytoplasm. It catalyses the reaction L-aspartate + H(+) = beta-alanine + CO2. It participates in cofactor biosynthesis; (R)-pantothenate biosynthesis; beta-alanine from L-aspartate: step 1/1. Functionally, catalyzes the pyruvoyl-dependent decarboxylation of aspartate to produce beta-alanine. In Frankia casuarinae (strain DSM 45818 / CECT 9043 / HFP020203 / CcI3), this protein is Aspartate 1-decarboxylase 2.